The following is a 564-amino-acid chain: Pyranose 2-oxidase (564 aa).

The propeptide occupies 1-25; sequence MPIRLSKEKINDLLQRSQGDLTSSQ. H158 is subject to Tele-8alpha-FAD histidine. The substrate site is built by Q392 and H394. Residue H498 is the Proton acceptor of the active site. N541 is an active-site residue.

This sequence belongs to the GMC oxidoreductase family. As to quaternary structure, homotetramer. FAD is required as a cofactor.

It carries out the reaction D-glucose + O2 = 2-dehydro-D-glucose + H2O2. Catalyzes the oxidation of various aldopyranoses and disaccharides on carbon-2 to the corresponding 2-keto sugars concomitant with the reduction of O(2) to H(2)O(2). The preferred substrate is D-glucose which is converted to 2-dehydro-D-glucose. Acts also on D-xylose, L-sorbose, D-galactose and 1,5-anhydroglucitol, a diagnostic marker of diabetes mellitus. In Tricholoma matsutake (Matsutake mushroom), this protein is Pyranose 2-oxidase (p2ox).